Consider the following 491-residue polypeptide: MLQGTGSDVGKSVLVAGLCRALVQRGLRVLPFKPQNMSNNAAVTSDGGEIGRAQALQAIACKVEPHTDMNPVLLKPQADRTSQLIVHGRVRGTLGAGNFRQARGALLGEVLASYNRLRRACDIVVVEGAGSPAEINLRAGDIANMGFARAAGVPVVLVGDIDRGGVIAAIVGTRTIIDPADTAMIQGFIINKFRGDPALFADGYAQIESLSGWRGFGVVPWLSAAARLPSEDAVVLESGKARAESRKLIACPILPRISNFDDLDPLKLEHGVDLHMVPPGQPIPAEAALIILPGSKSTIADLAALRAEGWDIDIFAHHRRGGLILGLCGGYQMLGKSIADPDGFEGSASAASGLGLLDVETTLHAHKALRPVSGLAMGAPFQGYEMHMGQTNGPDTEQPFAVFADGRRDGAINAGGTVFGSYVHGLLADAELRRALLSRMDVEAGGVDYGASVEAALDEIAAALEEHLDIDALVALAMAERPASVPAGDSA.

The GATase cobBQ-type domain maps to 246 to 432; the sequence is RKLIACPILP…VHGLLADAEL (187 aa). Residue cysteine 328 is the Nucleophile of the active site. Residue histidine 424 is part of the active site.

This sequence belongs to the CobB/CobQ family. CobQ subfamily.

Its pathway is cofactor biosynthesis; adenosylcobalamin biosynthesis. Catalyzes amidations at positions B, D, E, and G on adenosylcobyrinic A,C-diamide. NH(2) groups are provided by glutamine, and one molecule of ATP is hydrogenolyzed for each amidation. The polypeptide is Cobyric acid synthase (Novosphingobium aromaticivorans (strain ATCC 700278 / DSM 12444 / CCUG 56034 / CIP 105152 / NBRC 16084 / F199)).